Consider the following 220-residue polypeptide: Probable GTP-binding protein EngB (220 aa).

In terms of domain architecture, EngB-type G spans 31–205 (AGVEIAFAGR…LGILNEWCHP (175 aa)). GTP-binding positions include 39–46 (GRSNAGKS), 66–70 (GRTQL), 84–87 (DLPG), 151–154 (TKAD), and 184–186 (FSS). Residues S46 and T68 each contribute to the Mg(2+) site.

The protein belongs to the TRAFAC class TrmE-Era-EngA-EngB-Septin-like GTPase superfamily. EngB GTPase family. Mg(2+) serves as cofactor.

Functionally, necessary for normal cell division and for the maintenance of normal septation. In Shewanella sediminis (strain HAW-EB3), this protein is Probable GTP-binding protein EngB.